A 313-amino-acid chain; its full sequence is Holliday junction branch migration complex subunit RuvB (313 aa).

The segment at 1 to 157 (MNEYIGQGNI…FGLIMELDFY (157 aa)) is large ATPase domain (RuvB-L). Residues Gly-38, Lys-41, Thr-42, Thr-43, 104-106 (EDF), Arg-147, Tyr-157, and Arg-194 contribute to the ATP site. Thr-42 contributes to the Mg(2+) binding site. The segment at 158 to 228 (SIDELSKIIE…MVEEIMFLLG (71 aa)) is small ATPAse domain (RuvB-S). The tract at residues 231-313 (KEGLDELDRK…KVQRGLFDEE (83 aa)) is head domain (RuvB-H). DNA contacts are provided by Arg-286 and Arg-291.

The protein belongs to the RuvB family. As to quaternary structure, homohexamer. Forms an RuvA(8)-RuvB(12)-Holliday junction (HJ) complex. HJ DNA is sandwiched between 2 RuvA tetramers; dsDNA enters through RuvA and exits via RuvB. An RuvB hexamer assembles on each DNA strand where it exits the tetramer. Each RuvB hexamer is contacted by two RuvA subunits (via domain III) on 2 adjacent RuvB subunits; this complex drives branch migration. In the full resolvosome a probable DNA-RuvA(4)-RuvB(12)-RuvC(2) complex forms which resolves the HJ.

The protein resides in the cytoplasm. It catalyses the reaction ATP + H2O = ADP + phosphate + H(+). In terms of biological role, the RuvA-RuvB-RuvC complex processes Holliday junction (HJ) DNA during genetic recombination and DNA repair, while the RuvA-RuvB complex plays an important role in the rescue of blocked DNA replication forks via replication fork reversal (RFR). RuvA specifically binds to HJ cruciform DNA, conferring on it an open structure. The RuvB hexamer acts as an ATP-dependent pump, pulling dsDNA into and through the RuvAB complex. RuvB forms 2 homohexamers on either side of HJ DNA bound by 1 or 2 RuvA tetramers; 4 subunits per hexamer contact DNA at a time. Coordinated motions by a converter formed by DNA-disengaged RuvB subunits stimulates ATP hydrolysis and nucleotide exchange. Immobilization of the converter enables RuvB to convert the ATP-contained energy into a lever motion, pulling 2 nucleotides of DNA out of the RuvA tetramer per ATP hydrolyzed, thus driving DNA branch migration. The RuvB motors rotate together with the DNA substrate, which together with the progressing nucleotide cycle form the mechanistic basis for DNA recombination by continuous HJ branch migration. Branch migration allows RuvC to scan DNA until it finds its consensus sequence, where it cleaves and resolves cruciform DNA. In Thermosipho melanesiensis (strain DSM 12029 / CIP 104789 / BI429), this protein is Holliday junction branch migration complex subunit RuvB.